The chain runs to 181 residues: Large ribosomal subunit protein uL5 (181 aa).

This sequence belongs to the universal ribosomal protein uL5 family. Part of the 50S ribosomal subunit; part of the 5S rRNA/L5/L18/L25 subcomplex. Contacts the 5S rRNA and the P site tRNA. Forms a bridge to the 30S subunit in the 70S ribosome.

Its function is as follows. This is one of the proteins that bind and probably mediate the attachment of the 5S RNA into the large ribosomal subunit, where it forms part of the central protuberance. In the 70S ribosome it contacts protein S13 of the 30S subunit (bridge B1b), connecting the 2 subunits; this bridge is implicated in subunit movement. Contacts the P site tRNA; the 5S rRNA and some of its associated proteins might help stabilize positioning of ribosome-bound tRNAs. The chain is Large ribosomal subunit protein uL5 from Mesomycoplasma hyopneumoniae (strain 7448) (Mycoplasma hyopneumoniae).